The sequence spans 562 residues: Dihydroxy-acid dehydratase (562 aa).

Residue D80 participates in Mg(2+) binding. C121 is a binding site for [2Fe-2S] cluster. 2 residues coordinate Mg(2+): D122 and K123. An N6-carboxylysine modification is found at K123. C194 is a binding site for [2Fe-2S] cluster. E446 lines the Mg(2+) pocket. The Proton acceptor role is filled by S472.

Belongs to the IlvD/Edd family. In terms of assembly, homodimer. The cofactor is [2Fe-2S] cluster. Requires Mg(2+) as cofactor.

The catalysed reaction is (2R)-2,3-dihydroxy-3-methylbutanoate = 3-methyl-2-oxobutanoate + H2O. It catalyses the reaction (2R,3R)-2,3-dihydroxy-3-methylpentanoate = (S)-3-methyl-2-oxopentanoate + H2O. It functions in the pathway amino-acid biosynthesis; L-isoleucine biosynthesis; L-isoleucine from 2-oxobutanoate: step 3/4. The protein operates within amino-acid biosynthesis; L-valine biosynthesis; L-valine from pyruvate: step 3/4. Functions in the biosynthesis of branched-chain amino acids. Catalyzes the dehydration of (2R,3R)-2,3-dihydroxy-3-methylpentanoate (2,3-dihydroxy-3-methylvalerate) into 2-oxo-3-methylpentanoate (2-oxo-3-methylvalerate) and of (2R)-2,3-dihydroxy-3-methylbutanoate (2,3-dihydroxyisovalerate) into 2-oxo-3-methylbutanoate (2-oxoisovalerate), the penultimate precursor to L-isoleucine and L-valine, respectively. This Staphylococcus aureus (strain Mu50 / ATCC 700699) protein is Dihydroxy-acid dehydratase.